A 77-amino-acid polypeptide reads, in one-letter code: MPKGKNLHVKIGDNVKIISGFDKNKTGEVTKIYRNTGKILVKGINFKFKHIKPNTESDVGEIKQFEAPIHHSNVKLI.

It belongs to the universal ribosomal protein uL24 family. As to quaternary structure, part of the 50S ribosomal subunit.

It is found in the plastid. It localises to the chloroplast. In terms of biological role, one of two assembly initiator proteins, it binds directly to the 5'-end of the 23S rRNA, where it nucleates assembly of the 50S subunit. This chain is Large ribosomal subunit protein uL24c (rpl24), found in Thalassiosira pseudonana (Marine diatom).